A 433-amino-acid chain; its full sequence is Histidinol dehydrogenase (433 aa).

Tyr-129, Gln-191, and Asn-214 together coordinate NAD(+). Ser-237, Gln-259, and His-262 together coordinate substrate. Positions 259 and 262 each coordinate Zn(2+). Residues Glu-326 and His-327 each act as proton acceptor in the active site. 4 residues coordinate substrate: His-327, Asp-360, Glu-414, and His-419. Asp-360 is a binding site for Zn(2+). His-419 contributes to the Zn(2+) binding site.

The protein belongs to the histidinol dehydrogenase family. Zn(2+) is required as a cofactor.

The catalysed reaction is L-histidinol + 2 NAD(+) + H2O = L-histidine + 2 NADH + 3 H(+). The protein operates within amino-acid biosynthesis; L-histidine biosynthesis; L-histidine from 5-phospho-alpha-D-ribose 1-diphosphate: step 9/9. Functionally, catalyzes the sequential NAD-dependent oxidations of L-histidinol to L-histidinaldehyde and then to L-histidine. This is Histidinol dehydrogenase from Methanosarcina barkeri (strain Fusaro / DSM 804).